Consider the following 368-residue polypeptide: 4-hydroxy-3-methylbut-2-en-1-yl diphosphate synthase (flavodoxin) (368 aa).

[4Fe-4S] cluster-binding residues include Cys268, Cys271, Cys303, and Glu310.

It belongs to the IspG family. [4Fe-4S] cluster is required as a cofactor.

The enzyme catalyses (2E)-4-hydroxy-3-methylbut-2-enyl diphosphate + oxidized [flavodoxin] + H2O + 2 H(+) = 2-C-methyl-D-erythritol 2,4-cyclic diphosphate + reduced [flavodoxin]. It participates in isoprenoid biosynthesis; isopentenyl diphosphate biosynthesis via DXP pathway; isopentenyl diphosphate from 1-deoxy-D-xylulose 5-phosphate: step 5/6. In terms of biological role, converts 2C-methyl-D-erythritol 2,4-cyclodiphosphate (ME-2,4cPP) into 1-hydroxy-2-methyl-2-(E)-butenyl 4-diphosphate. The polypeptide is 4-hydroxy-3-methylbut-2-en-1-yl diphosphate synthase (flavodoxin) (Listeria monocytogenes serotype 4b (strain F2365)).